The sequence spans 79 residues: UPF0291 protein SAV1341 (79 aa).

Positions 56-79 (IDPEGNDVTPEKIKEIQQKRDNKN) are disordered. Basic and acidic residues predominate over residues 64–79 (TPEKIKEIQQKRDNKN).

The protein belongs to the UPF0291 family.

It localises to the cytoplasm. The polypeptide is UPF0291 protein SAV1341 (Staphylococcus aureus (strain Mu50 / ATCC 700699)).